Reading from the N-terminus, the 457-residue chain is Dynein regulatory complex protein 10 (457 aa).

3 coiled-coil regions span residues 101–127, 209–258, and 292–381; these read EKAS…DQER, IQDI…LHQV, and QQDI…AESE. The IQ domain maps to 397-426; the sequence is MVRAATLIQAMWKGYLVRSMLRSRKKKRVK. The disordered stretch occupies residues 419-457; it reads SRKKKRVKSKGKDKGKGKEKPKEEKGKEKKAKGKGKGKK. The span at 428 to 445 shows a compositional bias: basic and acidic residues; sequence KGKDKGKGKEKPKEEKGK. Positions 446–457 are enriched in basic residues; that stretch reads EKKAKGKGKGKK.

The protein belongs to the DRC10 family. In terms of assembly, component of the nexin-dynein regulatory complex (N-DRC). Interacts with CFAP52.

It localises to the cytoplasm. Its subcellular location is the cytoskeleton. The protein resides in the flagellum axoneme. Component of the nexin-dynein regulatory complex (N-DRC), a key regulator of ciliary/flagellar motility which maintains the alignment and integrity of the distal axoneme and regulates microtubule sliding in motile axonemes. The protein is Dynein regulatory complex protein 10 (Iqcd) of Rattus norvegicus (Rat).